The sequence spans 600 residues: Glutamine--fructose-6-phosphate aminotransferase [isomerizing] (600 aa).

The active-site Nucleophile; for GATase activity is the cysteine 2. Residues 2–217 (CGIVGYIGYQ…DGELVIVTSE (216 aa)) form the Glutamine amidotransferase type-2 domain. SIS domains lie at 283 to 422 (IINE…AKGF) and 452 to 590 (IASD…VDKP). The For Fru-6P isomerization activity role is filled by lysine 595.

Homodimer.

The protein localises to the cytoplasm. It carries out the reaction D-fructose 6-phosphate + L-glutamine = D-glucosamine 6-phosphate + L-glutamate. In terms of biological role, catalyzes the first step in hexosamine metabolism, converting fructose-6P into glucosamine-6P using glutamine as a nitrogen source. This chain is Glutamine--fructose-6-phosphate aminotransferase [isomerizing], found in Geobacillus kaustophilus (strain HTA426).